Consider the following 118-residue polypeptide: Ribonuclease P protein component (118 aa).

The protein belongs to the RnpA family. As to quaternary structure, consists of a catalytic RNA component (M1 or rnpB) and a protein subunit.

It catalyses the reaction Endonucleolytic cleavage of RNA, removing 5'-extranucleotides from tRNA precursor.. Its function is as follows. RNaseP catalyzes the removal of the 5'-leader sequence from pre-tRNA to produce the mature 5'-terminus. It can also cleave other RNA substrates such as 4.5S RNA. The protein component plays an auxiliary but essential role in vivo by binding to the 5'-leader sequence and broadening the substrate specificity of the ribozyme. The protein is Ribonuclease P protein component of Enterococcus faecalis (strain ATCC 700802 / V583).